Consider the following 103-residue polypeptide: Potassium voltage-gated channel subfamily E member 3 (103 aa).

Asn5, Asn22, and Asn41 each carry an N-linked (GlcNAc...) asparagine glycan. A disordered region spans residues Arg32–Arg53. Basic and acidic residues predominate over residues Thr43 to Arg53. The chain crosses the membrane as a helical span at residues Ser57–Leu77. The interaction with KCNQ1 stretch occupies residues Phe68–Tyr79. Over Gly78–Ile103 the chain is Cytoplasmic.

Belongs to the potassium channel KCNE family. In terms of assembly, interacts with KCNB1. Interacts with KCNC2. Associates with KCNC4/Kv3.4. Interacts with KCNQ1; associates with a KCNQ1:KCNE3 stoichiometry of 4:4; produces a current with nearly instantaneous activation with a linear current-voltage relationship and alters membrane raft localization; affects KCNQ1 structure and gating properties. Expressed in hippocampal neurons (at protein level). Widely expressed with highest levels in kidney and moderate levels in small intestine.

Its subcellular location is the cell membrane. The protein localises to the cytoplasm. It localises to the perikaryon. It is found in the cell projection. The protein resides in the dendrite. Its subcellular location is the membrane raft. In terms of biological role, ancillary protein that functions as a regulatory subunit of the voltage-gated potassium (Kv) channel complex composed of pore-forming and potassium-conducting alpha subunits and of regulatory beta subunits. KCNE3 beta subunit modulates the gating kinetics and enhances stability of the channel complex. Alters the gating of the delayed rectifier Kv channel containing KCNB1 alpha subunit. Associates with KCNC4/Kv3.4 alpha subunit to form the subthreshold Kv channel in skeletal muscle and to establish the resting membrane potential (RMP) in muscle cells. Association with KCNQ1/KCLQT1 alpha subunit may form the intestinal cAMP-stimulated potassium channel involved in chloride secretion that produces a current with nearly instantaneous activation with a linear current-voltage relationship. This chain is Potassium voltage-gated channel subfamily E member 3, found in Homo sapiens (Human).